A 151-amino-acid chain; its full sequence is Large ribosomal subunit protein uL13 (151 aa).

The protein belongs to the universal ribosomal protein uL13 family. Part of the 50S ribosomal subunit.

Its function is as follows. This protein is one of the early assembly proteins of the 50S ribosomal subunit, although it is not seen to bind rRNA by itself. It is important during the early stages of 50S assembly. The polypeptide is Large ribosomal subunit protein uL13 (Synechocystis sp. (strain ATCC 27184 / PCC 6803 / Kazusa)).